Consider the following 291-residue polypeptide: ATP synthase subunit a (291 aa).

Helical transmembrane passes span 47–67 (FTNL…LVFV), 140–160 (HFLI…IVGF), 167–187 (FFSF…LVLL), 207–227 (MMAG…MLFL), and 230–250 (IFYF…TGLE).

The protein belongs to the ATPase A chain family. As to quaternary structure, F-type ATPases have 2 components, CF(1) - the catalytic core - and CF(0) - the membrane proton channel. CF(1) has five subunits: alpha(3), beta(3), gamma(1), delta(1), epsilon(1). CF(0) has three main subunits: a, b and c.

It is found in the mitochondrion inner membrane. Functionally, mitochondrial membrane ATP synthase (F(1)F(0) ATP synthase or Complex V) produces ATP from ADP in the presence of a proton gradient across the membrane which is generated by electron transport complexes of the respiratory chain. F-type ATPases consist of two structural domains, F(1) - containing the extramembraneous catalytic core and F(0) - containing the membrane proton channel, linked together by a central stalk and a peripheral stalk. During catalysis, ATP synthesis in the catalytic domain of F(1) is coupled via a rotary mechanism of the central stalk subunits to proton translocation. Key component of the proton channel; it may play a direct role in the translocation of protons across the membrane. The sequence is that of ATP synthase subunit a (ATP6) from Zea mays (Maize).